A 412-amino-acid polypeptide reads, in one-letter code: CapZ-interacting protein (412 aa).

Disordered regions lie at residues 1–84 (MEER…KSSP) and 99–412 (ALLP…DTRM). Residues 7 to 20 (ETNSNVDSSAQPSV) show a composition bias toward polar residues. A phosphoserine mark is found at S68, S82, S83, S105, S108, S116, S120, and S123. T124 is modified (phosphothreonine). 4 positions are modified to phosphoserine: S126, S127, S135, and S143. Residues 159-176 (VRTRGSIKRRPPSRRFRR) are compositionally biased toward basic residues. Residues S177, S179, and S216 each carry the phosphoserine modification. Residues T243 and T256 each carry the phosphothreonine modification. Residues 248 to 258 (EKPEELVRTPE) show a composition bias toward basic and acidic residues. S297 is subject to Phosphoserine. Basic and acidic residues-rich tracts occupy residues 298-312 (PREE…DTGK) and 319-330 (SEERVADEDRLG). Residues S333 and S401 each carry the phosphoserine modification.

In terms of assembly, interacts with CAPZA2 and CAPZB. In terms of processing, dephosphorylation results in its dissociation from CAPZA2.

Its function is as follows. Stress-induced phosphorylation of CAPZIP may regulate the ability of F-actin-capping protein to remodel actin filament assembly. This Mus musculus (Mouse) protein is CapZ-interacting protein (Rcsd1).